Reading from the N-terminus, the 238-residue chain is MGRKWANIVAKKTAKDGATSKVYAKFGVEIYAAAKQGEPDPESNSSLKFVIERAKQAQVPKHVIDKAIDKAKGGGDETFVQGRYEGFGPNGSMVIAETLTSNVNRTIANVRTTFHKNGGNIGAAGAVSYMFDNTGVIVFEGTDPDHIFEILLDAEVDVRDVTEEEGNIVVYTEPTDLHKGIAALKAAGITEFSTTELEMIAQSEVELSPEDLEIFEGLIDALEDDDDVQKVYHNVANL.

It belongs to the TACO1 family. YeeN subfamily.

The protein resides in the cytoplasm. This Lactococcus lactis subsp. cremoris (strain SK11) protein is Probable transcriptional regulatory protein LACR_0237.